Reading from the N-terminus, the 299-residue chain is Transcription factor BHLH148 (299 aa).

The tract at residues 90 to 127 (RMGGGGGGGEKGEGEEMEEEEEVPQRRRRGQGADVESS) is disordered. Acidic residues predominate over residues 102–111 (EGEEMEEEEE). The tract at residues 127 to 140 (SRGFRHMMRERQRR) is basic motif; degenerate. The 50-residue stretch at 127-176 (SRGFRHMMRERQRREKLSQSYADLYAMVSSRSKGDKNSIVQSAAIYIHEL) folds into the bHLH domain. The tract at residues 141–176 (EKLSQSYADLYAMVSSRSKGDKNSIVQSAAIYIHEL) is helix-loop-helix motif. Residues 273-299 (ERNQPDSDAPFPGSKGWTQTSHVQNVF) are disordered. A compositionally biased stretch (polar residues) spans 288–299 (GWTQTSHVQNVF).

This sequence belongs to the bHLH protein family. Interacts with TIFY10A/JAZ6, TIFY10B/JAZ7, TIFY11A/JAZ9, TIFY11C/JAZ11, and TIFY11D/JAZ12.

It is found in the nucleus. Its function is as follows. May act on an initial response of jasmonate-regulated gene expression toward drought tolerance as part of a BHLH148-TIFY11D/JAZ12-COI1A complex. In Oryza sativa subsp. japonica (Rice), this protein is Transcription factor BHLH148.